The following is a 145-amino-acid chain: Flagellar assembly factor FliW (145 aa).

The protein belongs to the FliW family. Interacts with translational regulator CsrA and flagellin(s).

Its subcellular location is the cytoplasm. Its function is as follows. Acts as an anti-CsrA protein, binds CsrA and prevents it from repressing translation of its target genes, one of which is flagellin. Binds to flagellin and participates in the assembly of the flagellum. The sequence is that of Flagellar assembly factor FliW from Anoxybacillus flavithermus (strain DSM 21510 / WK1).